Reading from the N-terminus, the 266-residue chain is Gap junction beta-4 protein (266 aa).

An intramembrane segment occupies 2 to 13; it reads NWAFLQGLLSGV. Residues 14–20 lie on the Cytoplasmic side of the membrane; sequence NKYSTVL. Residues 21 to 40 form a helical membrane-spanning segment; it reads SRIWLSVVFIFRVLVYVVAA. Residues 41 to 73 lie on the Extracellular side of the membrane; it reads EEVWDDEQKDFVCNTKQPGCPNVCYDEFFPVSH. Intrachain disulfides connect Cys-53-Cys-175, Cys-60-Cys-169, and Cys-64-Cys-164. The helical transmembrane segment at 74–94 threads the bilayer; sequence VRLWALQLILVTCPSLLVVMH. Topologically, residues 95–130 are cytoplasmic; it reads VAYREERERKHHLKHGPNAPSLYDNLSKKRGGLWWT. A helical membrane pass occupies residues 131 to 151; the sequence is YLLSLIFKAAVDAGFLYIFHR. Over 152 to 184 the chain is Extracellular; the sequence is LYKDYDMPRVVACSVEPCPHTVDCYISRPTEKK. The chain crosses the membrane as a helical span at residues 185–205; it reads VFTYFMVTTAAICILLNLSEV. Over 206 to 266 the chain is Cytoplasmic; sequence FYLVGKRCME…SAPVDAGGYP (61 aa).

Belongs to the connexin family. Beta-type (group I) subfamily. A hemichannel or connexon is composed of a hexamer of connexins. A functional gap junction is formed by the apposition of two hemichannels. Forms heteromeric channels with GJB2.

The protein resides in the cell membrane. It is found in the cell junction. Its subcellular location is the gap junction. Functionally, structural component of gap junctions. Gap junctions are dodecameric channels that connect the cytoplasm of adjoining cells. They are formed by the docking of two hexameric hemichannels, one from each cell membrane. Small molecules and ions diffuse from one cell to a neighboring cell via the central pore. The polypeptide is Gap junction beta-4 protein (GJB4) (Homo sapiens (Human)).